We begin with the raw amino-acid sequence, 217 residues long: CXXC-type zinc finger protein 4 (217 aa).

Residues 1–20 (MHRNDSQRLGKPGGAPESLQ) are disordered. The segment at 122–163 (AKKKRKRCGVCVPCKRLINCGVCSSCRNRKTGHQICKFRKCE) adopts a CXXC-type zinc-finger fold. Zn(2+)-binding residues include cysteine 129, cysteine 132, cysteine 135, cysteine 141, cysteine 144, cysteine 147, cysteine 157, and cysteine 162.

It is found in the cytoplasm. Acts as a negative regulator of the Wnt signaling pathway required for anterior neural structure formation. Ectopic expression induces ventralization. Binds preferentially to DNA containing cytidine-phosphate-guanosine (CpG) dinucleotides over CpH (H=A, T, and C), hemimethylated-CpG and hemimethylated-hydroxymethyl-CpG. The protein is CXXC-type zinc finger protein 4 (cxxc4) of Xenopus laevis (African clawed frog).